Consider the following 374-residue polypeptide: MSLEAFHHSEPLTLGVELELQLVSTNDYDLAPYAEDMLRIMKKVPLPGSVVPEMTNSMIEISTGVCHSSSEVLGQLTQIRDALVKSADKLNIAVVGGGTHPFQQWHERRIYDKPRFQELSQLYGYLSKQFTIFGQHVHIGCPDADSALLMLHRMSRYIPHFIALSASSPYVQAQDTQFDSARLNSVFAFPLSGRAPCVLTWSEFEQYFNKMTRTGVVKSMKDFYWDIRPKPEYGTIEIRVFDTPLTIERAAALAGYVQSLAAWFLAEQPFTPTEDDYLVYTYNRFQACRFGLDAVYVDPASGDHMPLRDHILQTLDHVARYAGTHGASGALHMLRGETALGQNDARWLRERQREEQLLAEVSRQAALRFRGHDI.

Belongs to the glutamate--cysteine ligase type 2 family. YbdK subfamily.

It catalyses the reaction L-cysteine + L-glutamate + ATP = gamma-L-glutamyl-L-cysteine + ADP + phosphate + H(+). Its function is as follows. ATP-dependent carboxylate-amine ligase which exhibits weak glutamate--cysteine ligase activity. This Acidovorax sp. (strain JS42) protein is Putative glutamate--cysteine ligase 2.